The sequence spans 399 residues: S-adenosylmethionine synthase (399 aa).

His16 contacts ATP. A Mg(2+)-binding site is contributed by Asp18. Glu44 provides a ligand contact to K(+). Residues Glu57 and Gln100 each coordinate L-methionine. Residues 100–110 are flexible loop; that stretch reads QSPDIAQGVDD. ATP contacts are provided by residues 174–176, 241–242, Asp250, 256–257, Ala273, and Lys277; these read DAK, RF, and RK. Position 250 (Asp250) interacts with L-methionine. Lys281 contributes to the L-methionine binding site.

The protein belongs to the AdoMet synthase family. Homotetramer; dimer of dimers. Mg(2+) serves as cofactor. K(+) is required as a cofactor.

The protein localises to the cytoplasm. It carries out the reaction L-methionine + ATP + H2O = S-adenosyl-L-methionine + phosphate + diphosphate. It participates in amino-acid biosynthesis; S-adenosyl-L-methionine biosynthesis; S-adenosyl-L-methionine from L-methionine: step 1/1. Catalyzes the formation of S-adenosylmethionine (AdoMet) from methionine and ATP. The overall synthetic reaction is composed of two sequential steps, AdoMet formation and the subsequent tripolyphosphate hydrolysis which occurs prior to release of AdoMet from the enzyme. The chain is S-adenosylmethionine synthase from Latilactobacillus sakei subsp. sakei (strain 23K) (Lactobacillus sakei subsp. sakei).